Consider the following 514-residue polypeptide: Citrate synthase 2, peroxisomal (514 aa).

Residues His-324, His-363, and Asp-419 contribute to the active site.

This sequence belongs to the citrate synthase family. As to expression, widely expressed. Expressed throughout the shoot. Expressed in flower, silique, stem, cauline leaf, young leaf, mature leaf and senescent leaf.

The protein localises to the peroxisome. It carries out the reaction oxaloacetate + acetyl-CoA + H2O = citrate + CoA + H(+). Its pathway is carbohydrate metabolism; tricarboxylic acid cycle; isocitrate from oxaloacetate: step 1/2. Peroxisomal citrate synthase required for the fatty acid respiration in seedlings, citrate being exported from peroxisomes into mitochondria during respiration of triacylglycerol (TAG). Indeed, complete respiration requires the transfer of carbon in the form of citrate from the peroxisome to the mitochondria. This chain is Citrate synthase 2, peroxisomal (CSY2), found in Arabidopsis thaliana (Mouse-ear cress).